A 172-amino-acid polypeptide reads, in one-letter code: Myosin regulatory light polypeptide 9 (172 aa).

Positions 1–16 (MSSKRAKTKTTKKRPQ) are enriched in basic residues. The segment at 1-20 (MSSKRAKTKTTKKRPQRATS) is disordered. At Ser2 the chain carries N-acetylserine. Thr19 carries the post-translational modification Phosphothreonine; by MLCK, CIT and ROCK2. At Ser20 the chain carries Phosphoserine; by CDC42BP, CIT, MLCK, PAK1, ROCK1, ROCK2, DAPK1, DAPK2 and ZIPK/DAPK3. EF-hand domains are found at residues 29–64 (SQIQ…LGKN), 98–133 (DPED…MGDR), and 134–169 (FTDE…GAKD). Ca(2+) is bound by residues Asp42, Asn44, Asp46, and Asp53.

In terms of assembly, myosin is a hexamer of 2 heavy chains and 4 light chains: interacts with myosin heavy chain MYO19. Interacts with LUZP1; the interaction results in inhibition of phosphorylation of MYL9 by DAPK3. Post-translationally, phosphorylation increases the actin-activated myosin ATPase activity and thereby regulates the contractile activity. It is required to generate the driving force in the migration of the cells but not necessary for localization of myosin-2 at the leading edge. Phosphorylation is required for myotube formation. Phosphorylated by DAPK3; DAPK3-mediated phosphorylation is inhibited by LUZP1.

Its subcellular location is the cytoplasm. The protein localises to the cytoskeleton. It localises to the cell cortex. Functionally, myosin regulatory subunit that plays an important role in regulation of both smooth muscle and nonmuscle cell contractile activity via its phosphorylation. Implicated in cytokinesis, receptor capping, and cell locomotion. In myoblasts, may regulate PIEZO1-dependent cortical actomyosin assembly involved in myotube formation. The polypeptide is Myosin regulatory light polypeptide 9 (MYL9) (Bos taurus (Bovine)).